A 201-amino-acid chain; its full sequence is MSTGSVSDPEDSEMRGLQRVYPAPASKRPPLLRMERGYGSPSDISSAEEEDGEEEPGSLGAAGGCKRKRLRGADAGGAGGRAGGAGKKPLPPKGSAAECKQSQRNAANARERARMRVLSKAFSRLKTSLPWVPPDTKLSKLDTLRLASSYIAHLRQLLQEDRYEDSYVHPVNLTWPFVVSGRPDSDSKDVSAANRLCGTSA.

Disordered regions lie at residues 1–108 (MSTG…NAAN) and 182–201 (RPDS…GTSA). Over residues 46–56 (SAEEEDGEEEP) the composition is skewed to acidic residues. Residues 66–71 (KRKRLR) carry the Nuclear localization signal motif. Residues 74–86 (DAGGAGGRAGGAG) are compositionally biased toward gly residues. A bHLH domain is found at 102 to 154 (SQRNAANARERARMRVLSKAFSRLKTSLPWVPPDTKLSKLDTLRLASSYIAHL).

As to quaternary structure, efficient DNA binding requires dimerization with another bHLH protein. Binds DNA as a homodimer or a heterodimer. Forms a heterodimer with TCF3.

It is found in the nucleus. Functionally, transcription repressor that blocks myogenesis and activation of E-box dependent muscle genes. This is Musculin (Msc) from Mus musculus (Mouse).